The following is a 441-amino-acid chain: Glutamyl-tRNA reductase (441 aa).

Residues 47 to 50 (TCNR), S110, 115 to 117 (ERE), and Q121 contribute to the substrate site. The active-site Nucleophile is the C48. 192 to 197 (GTGAYA) provides a ligand contact to NADP(+).

This sequence belongs to the glutamyl-tRNA reductase family. Homodimer.

It carries out the reaction (S)-4-amino-5-oxopentanoate + tRNA(Glu) + NADP(+) = L-glutamyl-tRNA(Glu) + NADPH + H(+). Its pathway is porphyrin-containing compound metabolism; protoporphyrin-IX biosynthesis; 5-aminolevulinate from L-glutamyl-tRNA(Glu): step 1/2. Catalyzes the NADPH-dependent reduction of glutamyl-tRNA(Glu) to glutamate 1-semialdehyde (GSA). In Pseudarthrobacter chlorophenolicus (strain ATCC 700700 / DSM 12829 / CIP 107037 / JCM 12360 / KCTC 9906 / NCIMB 13794 / A6) (Arthrobacter chlorophenolicus), this protein is Glutamyl-tRNA reductase.